A 970-amino-acid chain; its full sequence is Anaphase-promoting complex subunit 3 (970 aa).

TPR repeat units lie at residues 35–68 (EDNLFKIAQIYYQMGKINQCLLILQQHPQITMIK), 74–107 (ALSNYDLGNIQEAESSIIKCCIYFEKYFQPNNNN), 142–175 (NNNSNSNNNENEYYGIYSDILCEFDDIVDINSIS), and 185–218 (GSVYYLMGLISKRKNQKEKAIKYLKKSVYTYPFL). A disordered region spans residues 106–149 (NNNNNNNNNNNNNNNNNNNNNNNKDKCNNSNKNNDSNNNSNSNN). Residues 274–300 (KVNNNNNNNNNNNNNINNNNSSNKNNE) form a disordered region. TPR repeat units lie at residues 319–353 (IKPNNFIKPPYHPNHRVGLTPSSFYDSSIHITPIN) and 361–394 (TNQQQQQQQQQQPQQPSQQNLQKYNNRYFVTPQT). Disordered stretches follow at residues 358–379 (IQQTNQQQQQQQQQQPQQPSQQ), 414–525 (PIPM…TTTT), and 556–582 (SSLSDDDYDEENHHYQQHHHLHHHNKS). Positions 359 to 379 (QQTNQQQQQQQQQQPQQPSQQ) are enriched in low complexity. Residues 424-443 (SKGSQHPPSSNSQTPYTPST) show a composition bias toward polar residues. Basic residues predominate over residues 446-460 (VHHHQKQQPHQHKKS). Over residues 500 to 525 (TSSTSKQQQQQQQTKQQTTTTTTTTT) the composition is skewed to low complexity. TPR repeat units lie at residues 546-580 (TEEFSLKSLSSSLSDDDYDEENHHYQQHHHLHHHN), 636-671 (LELFFILADSYRLLCLYLCKEAIESFKRLSEEQYRT), 672-705 (GWVLTKVAKAYHELIDYKEARSIFQEVSQMEPYR), 740-773 (PYSWVVVGNCFSLQRDHEAAIKLFRRAIQLDPDM), 775-807 (YAYTLCGHEYLANDELELALNAFRMAIRCDPRH), 808-841 (YNAFYGIGLIYYRQEKYNLAEYHFRKALSINESS), 843-876 (VLCCYLGMTLQHNPNKIQDGIDMLYRSIEIQPKN), 878-910 (FAKFKLAAFLFANQQYHHAIDQLLEFKEIEPKE), and 911-944 (TPIYILLGKCYKQLGELDKALDSLNTALDLDPKN). Basic residues predominate over residues 570 to 580 (YQQHHHLHHHN).

This sequence belongs to the APC3/CDC27 family. In terms of assembly, the APC/C is composed of at least 13 subunits that stay tightly associated throughout the cell cycle: anapc1, anapc2, anapc3, anapc4, anapc5, anapc6, anapc7, anapc8, anapc10, anapc11, cdc20, cdc26 and cdh1.

The protein resides in the nucleus. It participates in protein modification; protein ubiquitination. In terms of biological role, component of the anaphase promoting complex/cyclosome (APC/C), a cell cycle-regulated E3 ubiquitin-protein ligase complex that controls progression through mitosis and the G1 phase of the cell cycle. This is Anaphase-promoting complex subunit 3 (anapc3) from Dictyostelium discoideum (Social amoeba).